Reading from the N-terminus, the 744-residue chain is Eukaryotic translation initiation factor 3 subunit B (744 aa).

The disordered stretch occupies residues Met1 to Glu20. Residues Pro11–Glu20 show a composition bias toward acidic residues. The region spanning Thr40–Asp126 is the RRM domain. WD repeat units follow at residues Asp193–Arg232, Ala234–Ser290, Pro307–Lys348, and Ala577–Glu622. The span at Glu699–Lys714 shows a compositional bias: basic and acidic residues. The interval Glu699–Glu722 is disordered.

The protein belongs to the eIF-3 subunit B family. In terms of assembly, component of the eukaryotic translation initiation factor 3 (eIF-3) complex.

It is found in the cytoplasm. In terms of biological role, RNA-binding component of the eukaryotic translation initiation factor 3 (eIF-3) complex, which is involved in protein synthesis of a specialized repertoire of mRNAs and, together with other initiation factors, stimulates binding of mRNA and methionyl-tRNAi to the 40S ribosome. The eIF-3 complex specifically targets and initiates translation of a subset of mRNAs involved in cell proliferation. The sequence is that of Eukaryotic translation initiation factor 3 subunit B (prt1) from Sclerotinia sclerotiorum (strain ATCC 18683 / 1980 / Ss-1) (White mold).